Here is a 350-residue protein sequence, read N- to C-terminus: MLDIDGSWGEGGGQILRTTLSLSAITGQPIRLYQIRAGRQKPGLSAQHLTCVRAAATICNAEVRGDKLRSTLLEFIPTRPPQAGHYTFDVMDAQEGGSAGAVTLILQTILLPLAIASEESTVILKGGTHVAWSPPISYIEQVYLPLLSKLGLQTELHLQAWGWYPQGGGEVHLHIKGNCQLQGVELLERGALKQVKGLAVVTELPSHIPQRMAMRCEKLLQQAHVKGYVQPLRAKGVAPGAGVFLTSEYEHICAGFAALGRRGLPAESVAQNAVEQLLSFHQQDAPVEEFLGDQLLLPMILAQSPSQYRVAHISEHLKTNVQTISQFGLAQIDLNLEDRLVFVKPGHNLT.

ATP is bound by residues glutamine 107 and 290–294; that span reads FLGDQ. Catalysis depends on histidine 316, which acts as the Tele-AMP-histidine intermediate.

It belongs to the RNA 3'-terminal cyclase family. Type 1 subfamily.

The protein localises to the cytoplasm. It catalyses the reaction a 3'-end 3'-phospho-ribonucleotide-RNA + ATP = a 3'-end 2',3'-cyclophospho-ribonucleotide-RNA + AMP + diphosphate. Functionally, catalyzes the conversion of 3'-phosphate to a 2',3'-cyclic phosphodiester at the end of RNA. The mechanism of action of the enzyme occurs in 3 steps: (A) adenylation of the enzyme by ATP; (B) transfer of adenylate to an RNA-N3'P to produce RNA-N3'PP5'A; (C) and attack of the adjacent 2'-hydroxyl on the 3'-phosphorus in the diester linkage to produce the cyclic end product. The biological role of this enzyme is unknown but it is likely to function in some aspects of cellular RNA processing. This is RNA 3'-terminal phosphate cyclase from Gloeothece citriformis (strain PCC 7424) (Cyanothece sp. (strain PCC 7424)).